The sequence spans 63 residues: Beta-defensin 35 (63 aa).

The first 23 residues, 1 to 23 (MPQTFFVFCFLFFVFLQLFPGTG), serve as a signal peptide directing secretion. Disulfide bonds link Cys-31–Cys-58, Cys-38–Cys-52, and Cys-42–Cys-59.

Belongs to the beta-defensin family. Expressed in testis, epididymis (caput, corpus and cauda), kidney and neonatal and adult brain.

It is found in the secreted. In terms of biological role, has antibacterial activity. The polypeptide is Beta-defensin 35 (Defb35) (Mus musculus (Mouse)).